The following is a 181-amino-acid chain: MSLEQHYSSILTQLGEDVNREGLLDTPKRAAKAMKYLCRGYQQSLEEVVNGALFSSDNSEMVLVKDIELYSLCEHHLLPFIGKAHVAYIPNGKVLGLSKVARIVDMYARRLQIQENMSRQIAEAVQQVTGALGVAVVIQAQHMCMMMRGVEKQNSSMVTSVMLGEFRDNAATRSEFLSLIR.

Belongs to the GTP cyclohydrolase I family. In terms of assembly, homomer.

It catalyses the reaction GTP + H2O = 7,8-dihydroneopterin 3'-triphosphate + formate + H(+). Its pathway is cofactor biosynthesis; 7,8-dihydroneopterin triphosphate biosynthesis; 7,8-dihydroneopterin triphosphate from GTP: step 1/1. This chain is GTP cyclohydrolase 1 2 (folE2), found in Pseudomonas aeruginosa (strain ATCC 15692 / DSM 22644 / CIP 104116 / JCM 14847 / LMG 12228 / 1C / PRS 101 / PAO1).